A 272-amino-acid polypeptide reads, in one-letter code: Ribosomal RNA small subunit methyltransferase J (272 aa).

S-adenosyl-L-methionine-binding positions include arginine 120 to aspartate 121, glutamate 136 to arginine 137, serine 171 to serine 172, and aspartate 188.

This sequence belongs to the methyltransferase superfamily. RsmJ family.

Its subcellular location is the cytoplasm. The catalysed reaction is guanosine(1516) in 16S rRNA + S-adenosyl-L-methionine = N(2)-methylguanosine(1516) in 16S rRNA + S-adenosyl-L-homocysteine + H(+). Specifically methylates the guanosine in position 1516 of 16S rRNA. The polypeptide is Ribosomal RNA small subunit methyltransferase J (Colwellia psychrerythraea (strain 34H / ATCC BAA-681) (Vibrio psychroerythus)).